Here is a 114-residue protein sequence, read N- to C-terminus: Macrophage migration inhibitory factor homolog (114 aa).

Residue Pro-2 is the Proton acceptor; via imino nitrogen of the active site. Substrate is bound by residues Lys-33 and Asn-98.

Belongs to the MIF family.

It localises to the secreted. The enzyme catalyses L-dopachrome = 5,6-dihydroxyindole-2-carboxylate. It catalyses the reaction 3-phenylpyruvate = enol-phenylpyruvate. In terms of biological role, tautomerization of the methyl ester of L-dopachrome. Inhibits migration of human peripheral blood mononuclear cells. This is Macrophage migration inhibitory factor homolog from Trichuris trichiura (Whipworm).